The sequence spans 526 residues: Cytochrome P450 monooxygenase SAT11 (526 aa).

A helical transmembrane segment spans residues 18 to 38 (AFLLIAMLYLGYLLCICFYNI). Asn125 and Asn447 each carry an N-linked (GlcNAc...) asparagine glycan. Cys455 provides a ligand contact to heme. N-linked (GlcNAc...) asparagine glycosylation is present at Asn520.

Belongs to the cytochrome P450 family. The cofactor is heme.

It localises to the membrane. It participates in mycotoxin biosynthesis. Cytochrome P450 monooxygenase; part of the satratoxin SC2 cluster involved in the biosynthesis of satratoxins, trichothecene mycotoxins that are associated with human food poisonings. Satratoxins are suggested to be made by products of multiple gene clusters (SC1, SC2 and SC3) that encode 21 proteins in all, including polyketide synthases, acetyltransferases, and other enzymes expected to modify the trichothecene skeleton. SC1 encodes 10 proteins, SAT1 to SAT10. The largest are SAT8, which encodes a putative polyketide synthase (PKS) with a conventional non-reducing architecture, and SAT10, a putative protein containing four ankyrin repeats and thus may be involved in protein scaffolding. The putative short-chain reductase SAT3 may assist the PKS in some capacity. SAT6 contains a secretory lipase domain and acts probably as a trichothecene esterase. SAT5 encodes a putative acetyltransferase, and so, with SAT6, may affect endogenous protection from toxicity. The probable transcription factor SAT9 may regulate the expression of the SC1 cluster. SC2 encodes proteins SAT11 to SAT16, the largest of which encodes the putative reducing PKS SAT13. SAT11 is a cytochrome P450 monooxygenase, while SAT14 and SAT16 are probable acetyltransferases. The SC2 cluster may be regulated by the transcription factor SAT15. SC3 is a small cluster that encodes 5 proteins, SAT17 to SAT21. SAT21 is a putative MFS-type transporter which may have a role in exporting secondary metabolites. The four other proteins putatively encoded in SC3 include the taurine hydroxylase-like protein SAT17, the O-methyltransferase SAT18, the acetyltransferase SAT19, and the Cys6-type zinc finger SAT20, the latter being probably involved in regulation of SC3 expression. This chain is Cytochrome P450 monooxygenase SAT11, found in Stachybotrys chartarum (strain CBS 109288 / IBT 7711) (Toxic black mold).